Reading from the N-terminus, the 157-residue chain is Thioredoxin-T (157 aa).

One can recognise a Thioredoxin domain in the interval 2–107; sequence VYPVRNKDDL…LAKLMEKHAG (106 aa). Cys-32 and Cys-35 are oxidised to a cystine. The tract at residues 132–157 is disordered; sequence ESSESDNDNNNVNEVSAHDENAVLEH. Residues 147–157 show a composition bias toward basic and acidic residues; the sequence is SAHDENAVLEH.

It belongs to the thioredoxin family. As to expression, testis specific. Not expressed in the embryo. Becomes progressively more strongly expressed during larval and pupal development. In testis, it is strongly expressed in young spermatocytes, and postmeiotic spermatid stages, then expression decreases at the nuclear elongation stage. Strongly expressed in the waste bag, in which material no longer needed for the mature sperm is eliminated. Not expressed in the stem cells and spermatogonial cells.

The protein localises to the nucleus. Its subcellular location is the chromosome. In terms of biological role, probably participates in various redox reactions through the reversible oxidation of its active center dithiol to a disulfide and catalyzes dithiol-disulfide exchange reactions. Its tissue specificity suggests a regulatory role in the germline. The chain is Thioredoxin-T (TrxT) from Drosophila melanogaster (Fruit fly).